We begin with the raw amino-acid sequence, 296 residues long: MGIPSFLAFPAARRNRAHCTPWHPWGHMLLWTALLFLAPVSGKPDLPKAVVTIQPAWINVLREDHVTLTCQGTSFSAGNLTTWFHNGSSIHTQKQPSYSFRAGSNDSGSYRCQREQTSLSDPVHLDVISDWLLLQTPSLVFQEGEPIMLRCHSWRNQPLNKITFYQDRKSKIFSYQRTNFSIPRANLSHSGQYHCTAFIGKMLHSSQPVNITVQESSSSGPSSMTAVAIGTCFAAVAIVAAIITWFRLRRKPISAGLTDAENDAARTEAENTVTYSLLSHPDVAEEDSESDYQKRL.

The N-terminal stretch at 1–42 (MGIPSFLAFPAARRNRAHCTPWHPWGHMLLWTALLFLAPVSG) is a signal peptide. Over 43–225 (KPDLPKAVVT…SSSSGPSSMT (183 aa)) the chain is Extracellular. Ig-like C2-type domains follow at residues 47–129 (PKAV…DVIS) and 130–212 (DWLL…VNIT). Cystine bridges form between Cys-70–Cys-112 and Cys-151–Cys-195. Asn-79, Asn-86, Asn-105, Asn-179, Asn-186, and Asn-210 each carry an N-linked (GlcNAc...) asparagine glycan. A helical membrane pass occupies residues 226–246 (AVAIGTCFAAVAIVAAIITWF). The Cytoplasmic segment spans residues 247-296 (RLRRKPISAGLTDAENDAARTEAENTVTYSLLSHPDVAEEDSESDYQKRL). Positions 273 to 278 (VTYSLL) match the ITIM motif motif. Residue Tyr-275 is modified to Phosphotyrosine; by SRC-type Tyr-kinases. At Ser-288 the chain carries Phosphoserine. Tyr-292 is modified (phosphotyrosine).

Interacts with FGR and LYN. Post-translationally, phosphorylated by SRC-type Tyr-kinases such as LYN, BLK, FYN and SYK. Higher expression is found in macrophages than in neutrophils.

The protein localises to the cell membrane. Its function is as follows. Binds to the Fc region of immunoglobulins gamma. Low affinity receptor. The sequence is that of Low affinity immunoglobulin gamma Fc region receptor II (FCGR2) from Bos taurus (Bovine).